A 196-amino-acid chain; its full sequence is DnaA initiator-associating protein DiaA (196 aa).

Residues 34–196 (LVQSLLNGNK…DNTLFPHQDD (163 aa)) form the SIS domain.

The protein belongs to the SIS family. DiaA subfamily. As to quaternary structure, homotetramer; dimer of dimers.

Its function is as follows. Required for the timely initiation of chromosomal replication via direct interactions with the DnaA initiator protein. This Cronobacter sakazakii (strain ATCC BAA-894) (Enterobacter sakazakii) protein is DnaA initiator-associating protein DiaA.